A 123-amino-acid chain; its full sequence is Protein Wnt-7b (123 aa).

Residue serine 1 is the site of O-palmitoleoyl serine; by PORCN attachment. The interval 33–61 (VEAVRATRLRQPTFLKIKKPRTYRKPMVT) is disordered linker. Cysteine 89 and cysteine 104 form a disulfide bridge. An N-linked (GlcNAc...) asparagine glycan is attached at asparagine 90.

Belongs to the Wnt family. Palmitoleoylation is required for efficient binding to frizzled receptors. Depalmitoleoylation leads to Wnt signaling pathway inhibition.

The protein localises to the secreted. The protein resides in the extracellular space. It is found in the extracellular matrix. Its function is as follows. Ligand for members of the frizzled family of seven transmembrane receptors that functions in the canonical Wnt/beta-catenin signaling pathway. Required for normal fusion of the chorion and the allantois during placenta development. Required for central nervous system (CNS) angiogenesis and blood-brain barrier regulation. The protein is Protein Wnt-7b (WNT-7B) of Alopias vulpinus (Common thresher shark).